The following is a 342-amino-acid chain: Foldase protein PrsA (342 aa).

The first 22 residues, methionine 1 to glycine 22, serve as a signal peptide directing secretion. The N-palmitoyl cysteine moiety is linked to residue cysteine 23. Residue cysteine 23 is the site of S-diacylglycerol cysteine attachment. The 95-residue stretch at alanine 190–alanine 284 folds into the PpiC domain.

This sequence belongs to the PrsA family.

It is found in the cell membrane. The enzyme catalyses [protein]-peptidylproline (omega=180) = [protein]-peptidylproline (omega=0). Plays a major role in protein secretion by helping the post-translocational extracellular folding of several secreted proteins. The sequence is that of Foldase protein PrsA from Clostridium perfringens (strain SM101 / Type A).